We begin with the raw amino-acid sequence, 77 residues long: U8-lycotoxin-Ls1m (77 aa).

The signal sequence occupies residues 1–20; that stretch reads MKLIIFTGLVLFSIVSLIEA. A propeptide spanning residues 21-26 is cleaved from the precursor; the sequence is QAENEK.

The protein belongs to the neurotoxin 19 (CSTX) family. 08 (U8-Lctx) subfamily. In terms of processing, contains 4 disulfide bonds. In terms of tissue distribution, expressed by the venom gland.

It is found in the secreted. This Lycosa singoriensis (Wolf spider) protein is U8-lycotoxin-Ls1m.